The following is a 739-amino-acid chain: Ent-kaurene synthase-like 3 (739 aa).

5 residues coordinate Mg(2+): D475, D479, N619, T623, and E627. A DDXXD motif motif is present at residues 475 to 479; that stretch reads DDFFD.

It belongs to the terpene synthase family. It depends on Mg(2+) as a cofactor. In terms of tissue distribution, expressed in roots and stems.

In Oryza sativa subsp. japonica (Rice), this protein is Ent-kaurene synthase-like 3 (KSL3).